The primary structure comprises 315 residues: Cobalamin biosynthesis protein CobD (315 aa).

A run of 5 helical transmembrane segments spans residues 54-74 (GLLF…ILFL), 78-98 (IAYW…LAMT), 152-172 (ADGV…LALM), 203-223 (IANF…SFIL), and 295-315 (LLYM…LLLF).

It belongs to the CobD/CbiB family.

Its subcellular location is the cell membrane. It functions in the pathway cofactor biosynthesis; adenosylcobalamin biosynthesis. In terms of biological role, converts cobyric acid to cobinamide by the addition of aminopropanol on the F carboxylic group. This chain is Cobalamin biosynthesis protein CobD, found in Listeria monocytogenes serovar 1/2a (strain ATCC BAA-679 / EGD-e).